Consider the following 515-residue polypeptide: ATP synthase subunit alpha (515 aa).

171–178 contacts ATP; sequence GDRQTGKT.

Belongs to the ATPase alpha/beta chains family. In terms of assembly, F-type ATPases have 2 components, CF(1) - the catalytic core - and CF(0) - the membrane proton channel. CF(1) has five subunits: alpha(3), beta(3), gamma(1), delta(1), epsilon(1). CF(0) has three main subunits: a(1), b(2) and c(9-12). The alpha and beta chains form an alternating ring which encloses part of the gamma chain. CF(1) is attached to CF(0) by a central stalk formed by the gamma and epsilon chains, while a peripheral stalk is formed by the delta and b chains.

It is found in the cell membrane. The catalysed reaction is ATP + H2O + 4 H(+)(in) = ADP + phosphate + 5 H(+)(out). Produces ATP from ADP in the presence of a proton gradient across the membrane. The alpha chain is a regulatory subunit. The sequence is that of ATP synthase subunit alpha from Stenotrophomonas maltophilia (strain K279a).